Reading from the N-terminus, the 179-residue chain is Orotate phosphoribosyltransferase (179 aa).

5-phospho-alpha-D-ribose 1-diphosphate contacts are provided by residues Arg24, Arg89, Lys90, Lys93, and 115–123 (EDVITTGGA). 2 residues coordinate orotate: Thr119 and Arg147.

It belongs to the purine/pyrimidine phosphoribosyltransferase family. PyrE subfamily. Homodimer. Requires Mg(2+) as cofactor.

It carries out the reaction orotidine 5'-phosphate + diphosphate = orotate + 5-phospho-alpha-D-ribose 1-diphosphate. It functions in the pathway pyrimidine metabolism; UMP biosynthesis via de novo pathway; UMP from orotate: step 1/2. Catalyzes the transfer of a ribosyl phosphate group from 5-phosphoribose 1-diphosphate to orotate, leading to the formation of orotidine monophosphate (OMP). In Nocardioides sp. (strain ATCC BAA-499 / JS614), this protein is Orotate phosphoribosyltransferase.